We begin with the raw amino-acid sequence, 153 residues long: Prefoldin subunit alpha (153 aa).

This sequence belongs to the prefoldin subunit alpha family. In terms of assembly, heterohexamer of two alpha and four beta subunits.

It localises to the cytoplasm. Molecular chaperone capable of stabilizing a range of proteins. Seems to fulfill an ATP-independent, HSP70-like function in archaeal de novo protein folding. The protein is Prefoldin subunit alpha of Methanothrix thermoacetophila (strain DSM 6194 / JCM 14653 / NBRC 101360 / PT) (Methanosaeta thermophila).